Reading from the N-terminus, the 204-residue chain is Putative AgrB-like protein (204 aa).

4 helical membrane-spanning segments follow: residues 52–74 (YGIA…YLWL), 87–107 (LNCT…FQNV), 111–131 (NWIV…FAPA), and 156–176 (LILT…LIMI).

The protein belongs to the AgrB family.

It is found in the cell membrane. May be involved in the proteolytic processing of a quorum sensing system signal molecule precursor. The sequence is that of Putative AgrB-like protein from Listeria monocytogenes serotype 4a (strain HCC23).